We begin with the raw amino-acid sequence, 783 residues long: E3 UFM1-protein ligase 1 homolog (783 aa).

Residues 406–476 form a disordered region; sequence TLGTTHDADE…DAVQQSANSS (71 aa). Over residues 446-457 the composition is skewed to basic residues; it reads KSTKKHQRGRAA.

The protein belongs to the UFL1 family.

Functionally, E3 UFM1-protein ligase that mediates ufmylation of target proteins. The protein is E3 UFM1-protein ligase 1 homolog of Drosophila grimshawi (Hawaiian fruit fly).